Here is a 421-residue protein sequence, read N- to C-terminus: Alpha-1-antitrypsin (421 aa).

The N-terminal stretch at 1 to 24 is a signal peptide; it reads MASSSTWGLLLLAGLCCLVPISLA. Residues asparagine 73 and asparagine 110 are each glycosylated (N-linked (GlcNAc...) asparagine). The RCL stretch occupies residues 376 to 395; it reads GATILEAIPMSIPPNVKFNK. A Phosphoserine modification is found at serine 386.

It belongs to the serpin family. As to quaternary structure, interacts with CELA2A. Interacts with ERGIC3 and LMAN1/ERGIC53. Interacts with PRSS1/Trypsin.

The protein localises to the secreted. Inhibitor of serine proteases. Its primary target is elastase, but it also has a moderate affinity for plasmin and thrombin. The chain is Alpha-1-antitrypsin (SERPINA1) from Sus scrofa (Pig).